Here is a 203-residue protein sequence, read N- to C-terminus: dITP/XTP pyrophosphatase (203 aa).

7-12 (SGNLHK) provides a ligand contact to substrate. Mg(2+)-binding residues include E47 and D77. Residue D77 is the Proton acceptor of the active site. Substrate is bound by residues S78, 160 to 163 (FGYD), K183, and 188 to 189 (HR).

The protein belongs to the HAM1 NTPase family. In terms of assembly, homodimer. The cofactor is Mg(2+).

It carries out the reaction XTP + H2O = XMP + diphosphate + H(+). The enzyme catalyses dITP + H2O = dIMP + diphosphate + H(+). It catalyses the reaction ITP + H2O = IMP + diphosphate + H(+). Pyrophosphatase that catalyzes the hydrolysis of nucleoside triphosphates to their monophosphate derivatives, with a high preference for the non-canonical purine nucleotides XTP (xanthosine triphosphate), dITP (deoxyinosine triphosphate) and ITP. Seems to function as a house-cleaning enzyme that removes non-canonical purine nucleotides from the nucleotide pool, thus preventing their incorporation into DNA/RNA and avoiding chromosomal lesions. The protein is dITP/XTP pyrophosphatase of Opitutus terrae (strain DSM 11246 / JCM 15787 / PB90-1).